Here is a 581-residue protein sequence, read N- to C-terminus: Caprolactamase subunit beta (581 aa).

Residues aspartate 41, histidine 99, aspartate 102, and histidine 124 each coordinate Zn(2+).

The protein belongs to the HyuB family. The caprolactamase is a heterotetramer composed of two alpha subunits (CapA) and two beta subunits (CapB). Zn(2+) is required as a cofactor.

Activity is dependent on the presence of ATP and bicarbonate. The requirement for bicarbonate may be related to allosteric activation through conformational effects, but it is also conceivable that carboxyphosphate is formed and acts as a mediator in caprolactam activation, forming carboxy- or phospholactim. Component of a caprolactamase involved in the degradation of caprolactam, an industrial compound mainly used in the production of Nylon 6. Catalyzes the ATP-dependent hydrolysis of the caprolactam ring to form 6-aminocaproic acid (6-ACA). The beta subunit is responsible for hydrolytic lactam ring opening. The enzyme cannot use 5-oxoproline. The protein is Caprolactamase subunit beta of Pseudomonas jessenii.